Consider the following 153-residue polypeptide: Pheromone-binding protein Gp-9 (153 aa).

The signal sequence occupies residues 1-19 (MKTFVLHIFIFAFVAFASA). 3 disulfide bridges follow: Cys37-Cys77, Cys73-Cys129, and Cys118-Cys138.

Belongs to the PBP/GOBP family. Homodimer.

It localises to the secreted. Colony queen number, a major feature of social organization, is associated with worker genotype for Gp-9. Colonies are headed by either a single reproductive queen (monogyne form) or multiple queens (polygyne form). Differences in worker Gp-9 genotypes between social forms may cause differences in workers' abilities to recognize queens and regulate their numbers. The polypeptide is Pheromone-binding protein Gp-9 (Solenopsis amblychila (Desert fire ant)).